Reading from the N-terminus, the 152-residue chain is Large ribosomal subunit protein bL9 (152 aa).

The protein belongs to the bacterial ribosomal protein bL9 family.

Functionally, binds to the 23S rRNA. The chain is Large ribosomal subunit protein bL9 from Coxiella burnetii (strain RSA 331 / Henzerling II).